The primary structure comprises 293 residues: Methylsterol monooxygenase 1 (293 aa).

The next 2 membrane-spanning stretches (helical) occupy residues 55–75 and 100–120; these read LIVH…FQFI and KILF…YYFT. Residues 144–274 enclose the Fatty acid hydroxylase domain; that stretch reads GCAVIEDTWH…FTWWDKLFGT (131 aa). The Histidine box-1 motif lies at 157-161; the sequence is HRLLH. The Histidine box-2 motif lies at 170–174; the sequence is HKVHH. A helical transmembrane segment spans residues 199-219; that stretch reads FFIGIVLLCDHVILLWAWVTI. The Histidine box-3 motif lies at 249–255; sequence HHDFHHM.

The protein belongs to the sterol desaturase family. It depends on Fe cation as a cofactor. In terms of processing, ubiquitinated by MARCHF6, leading to proteasomal degradation.

It localises to the endoplasmic reticulum membrane. It catalyses the reaction 4,4-dimethyl-5alpha-cholest-7-en-3beta-ol + 6 Fe(II)-[cytochrome b5] + 3 O2 + 5 H(+) = 4alpha-carboxy-4beta-methyl-5alpha-cholest-7-ene-3beta-ol + 6 Fe(III)-[cytochrome b5] + 4 H2O. The catalysed reaction is 4,4-dimethyl-5alpha-cholesta-8,24-dien-3beta-ol + 6 Fe(II)-[cytochrome b5] + 3 O2 + 5 H(+) = 4beta-methylzymosterol-4alpha-carboxylate + 6 Fe(III)-[cytochrome b5] + 4 H2O. The enzyme catalyses 4alpha-methylzymosterol + 6 Fe(II)-[cytochrome b5] + 3 O2 + 5 H(+) = 4alpha-carboxyzymosterol + 6 Fe(III)-[cytochrome b5] + 4 H2O. It carries out the reaction 4alpha-methyl-5alpha-cholest-7-en-3beta-ol + 6 Fe(II)-[cytochrome b5] + 3 O2 + 5 H(+) = 4alpha-carboxy-5alpha-cholest-7-en-3beta-ol + 6 Fe(III)-[cytochrome b5] + 4 H2O. It catalyses the reaction 4,4-dimethyl-5alpha-cholest-8-en-3beta-ol + 6 Fe(II)-[cytochrome b5] + 3 O2 + 5 H(+) = 4alpha-carboxy-4beta-methyl-5alpha-cholest-8-en-3beta-ol + 6 Fe(III)-[cytochrome b5] + 4 H2O. The catalysed reaction is 4alpha-methyl-5alpha-cholest-8-en-3beta-ol + 6 Fe(II)-[cytochrome b5] + 3 O2 + 5 H(+) = 4alpha-carboxy-5alpha-cholest-8-ene-3beta-ol + 6 Fe(III)-[cytochrome b5] + 4 H2O. It functions in the pathway steroid biosynthesis; zymosterol biosynthesis; zymosterol from lanosterol: step 3/6. It participates in steroid biosynthesis; cholesterol biosynthesis. Catalyzes the three-step monooxygenation required for the demethylation of 4,4-dimethyl and 4alpha-methylsterols, which can be subsequently metabolized to cholesterol. The protein is Methylsterol monooxygenase 1 (Msmo1) of Mus musculus (Mouse).